Here is a 410-residue protein sequence, read N- to C-terminus: Peptidase T (410 aa).

Histidine 78 contacts Zn(2+). Residue aspartate 80 is part of the active site. Aspartate 140 provides a ligand contact to Zn(2+). Residue glutamate 174 is the Proton acceptor of the active site. 3 residues coordinate Zn(2+): glutamate 175, aspartate 197, and histidine 379.

The protein belongs to the peptidase M20B family. It depends on Zn(2+) as a cofactor.

It localises to the cytoplasm. The catalysed reaction is Release of the N-terminal residue from a tripeptide.. Its function is as follows. Cleaves the N-terminal amino acid of tripeptides. The sequence is that of Peptidase T from Vibrio atlanticus (strain LGP32) (Vibrio splendidus (strain Mel32)).